The primary structure comprises 450 residues: Beclin-1 (450 aa).

Methionine 1 is subject to N-acetylmethionine. Phosphoserine occurs at positions 15 and 30. Residues 48-72 (TTAQAKPGETQEEETNSGEEPFIET) are disordered. Phosphoserine; by AMPK occurs at positions 90, 93, and 96. The short motif at 108–127 (TMENLSRRLKVTGDLFDIMS) is the BH3 element. The interval 112-159 (LSRRLKVTGDLFDIMSGQTDVDHPLCEECTDTLLDQLDTQLNVTENEC) is interaction with BCL2 and BCL2L1. Threonine 119 is subject to Phosphothreonine; by DAPK1. A coiled-coil region spans residues 142–269 (DTLLDQLDTQ…QLDKLKKTNV (128 aa)). An evolutionary conserved domain (ECD) region spans residues 245–450 (DELKSVENQM…AWVSSQFYNK (206 aa)). Residues lysine 402 and lysine 437 each participate in a glycyl lysine isopeptide (Lys-Gly) (interchain with G-Cter in ubiquitin) cross-link. Residues 425–450 (WTKALKFMLTNLKWGLAWVSSQFYNK) form a required for membrane-association region.

Belongs to the beclin family. A homodimeric form is proposed to exist; this metastable form readily transits to ATG14- or UVRAG-containing complexes with BECN1:UVRAG being more stable than BECN1:ATG14. Component of the PI3K (PI3KC3/PI3K-III/class III phosphatidylinositol 3-kinase) complex the core of which is composed of the catalytic subunit PIK3C3, the regulatory subunit PIK3R4 and BECN1 associating with additional regulatory/auxiliary subunits to form alternative complex forms. Alternative complex forms containing a fourth regulatory subunit in a mutually exclusive manner are PI3K complex I (PI3KC3-C1) containing ATG14, and PI3K complex II (PI3KC3-C2) containing UVRAG. PI3KC3-C1 displays a V-shaped architecture with PIK3R4 serving as a bridge between PIK3C3 and the ATG14:BECN1 subcomplex. Both, PI3KC3-C1 and PI3KC3-C2, can associate with further regulatory subunits, such as RUBCN, SH3GLB1/Bif-1 and AMBRA1. PI3KC3-C1 probably associates with PIK3CB. Forms a complex with PPP2CA and AMBRA1; AMBRA1 and BECN1 components of the complex regulate MYC stability via different pathways. Component of the complex, at least composed of LRPPRC, BECN1 and BCL2; the interactions prevent BECN1 from forming an autophagy-inducing complex with PIK3C3. Interacts with AMBRA1, GOPC, GRID2. Interacts with BCL2 and BCL2L1 isoform Bcl-X(L); the interaction inhibits BECN1 function in promoting autophagy by interfering with the formation of the PI3K complex. Interacts with cytosolic HMGB1; inhibits the interaction of BECN1 and BCL2 leading to promotion of autophagy. Interacts with USP10, USP13, VMP1, DAPK1, RAB39A. Interacts with the poly-Gln domain of ATXN3; the interaction causes deubiquitination at Lys-402 and stabilizes BECN1. Interacts with SLAMF1. Interacts with TRIM5; the interaction causes activation of BECN1 by causing its dissociation from its inhibitors BCL2 and TAB2. Interacts with active ULK1 (phosphorylated on 'Ser-317') and MEFV simultaneously. Interacts with WDR81 and WDR91; negatively regulates the PI3 kinase/PI3K activity associated with endosomal membranes. Interacts with LAPTM4B; competes with EGFR for LAPTM4B binding; regulates EGFR activity. Interacts with TRIM50. Interacts with TRIM16. Interacts with ATG14; this interaction is increased in the absence of TMEM39A. Interacts with WASHC1; preventing interaction with AMBRA1 and the DCX(AMBRA1) complex and subsequent ubiquitination. Interacts with TRIM17. Interacts with BCL2L10/BCL-B (via BH1 domain). Interacts with SH3BGRL. Interacts with IRGM; enhancing BECN1-interacting partners and influencing the composition of the BECN1 complex. Interacts with ARMC3. Interacts with LRPPRC. Phosphorylation at Thr-119 by DAPK1 reduces its interaction with BCL2 and BCL2L1 and promotes induction of autophagy. In response to autophagic stimuli, phosphorylated at serine residues by AMPK in an ATG14-dependent manner, and this phosphorylation is critical for maximally efficient autophagy. Post-translationally, polyubiquitinated by NEDD4, both with 'Lys-11'- and 'Lys-63'-linkages. 'Lys-11'-linked polyubiquitination leads to degradation and is enhanced when the stabilizing interaction partner VPS34 is depleted. Deubiquitinated by USP10 and USP13, leading to stabilize the PIK3C3/VPS34-containing complexes. Polyubiquitinated at Lys-402 with 'Lys-48'-linkages. 'Lys-48'-linked polyubiquitination of Lys-402 leads to degradation. Deubiquitinated by ATXN3, leading to stabilization. Ubiquitinated at Lys-437 via 'Lys-63'-linkage by the DCX(AMBRA1) complex, thereby increasing the association between BECN1 and PIK3C3 to promote PIK3C3 activity. 'Lys-48'-linked ubiquitination by RNF216 leads to proteasomal degradation and autophagy inhibition. In terms of processing, proteolytically processed by caspases including CASP8 and CASP3; the C-terminal fragments lack autophagy-inducing capacity and are proposed to induce apoptosis. Thus the cleavage is proposed to be an determinant to switch from autophagy to apoptosis pathways affecting cellular homeostasis including viral infections and survival of tumor cells.

It localises to the cytoplasm. Its subcellular location is the golgi apparatus. The protein localises to the trans-Golgi network membrane. The protein resides in the endosome membrane. It is found in the endoplasmic reticulum membrane. It localises to the mitochondrion membrane. Its subcellular location is the cytoplasmic vesicle. The protein localises to the autophagosome. The protein resides in the mitochondrion. It is found in the nucleus. Plays a central role in autophagy. Acts as a core subunit of the PI3K complex that mediates formation of phosphatidylinositol 3-phosphate; different complex forms are believed to play a role in multiple membrane trafficking pathways: PI3KC3-C1 is involved in initiation of autophagosomes and PI3KC3-C2 in maturation of autophagosomes and endocytosis. Involved in regulation of degradative endocytic trafficking and required for the abscission step in cytokinesis, probably in the context of PI3KC3-C2. Essential for the formation of PI3KC3-C2 but not PI3KC3-C1 PI3K complex forms. Involved in endocytosis. May play a role in antiviral host defense. Functionally, beclin-1-C 35 kDa localized to mitochondria can promote apoptosis; it induces the mitochondrial translocation of BAX and the release of proapoptotic factors. The polypeptide is Beclin-1 (BECN1) (Pongo abelii (Sumatran orangutan)).